The primary structure comprises 222 residues: Eukaryotic translation initiation factor 4E-2 (222 aa).

Residues 1 to 20 are compositionally biased toward basic and acidic residues; it reads MVDEVEKPVSLEESKTNTRE. The interval 1 to 35 is disordered; that stretch reads MVDEVEKPVSLEESKTNTREVEEEGEIVGESDDTM. Residues 21–33 show a composition bias toward acidic residues; it reads VEEEGEIVGESDD. EIF4G-binding stretches follow at residues 47 to 50 and 57 to 93; these read HALE and FDNPSGKSKQAAWGSSIRPIYTFSTVEDFWSVYNNIH. Residues 65-70, K97, and 115-116 contribute to the mRNA site; these read KQAAWG and WE. Cysteines 120 and 158 form a disulfide. The tract at residues 141-150 is EIF4G-binding; the sequence is YTLLAMIGEQ. Residues 165 to 170 and 210 to 214 contribute to the mRNA site; these read RVRQEK and KKLDR.

It belongs to the eukaryotic initiation factor 4E family. In terms of assembly, EIF4F is a multi-subunit complex, the composition of which varies with external and internal environmental conditions. It is composed of at least EIF4A, EIF4E and EIF4G. EIF4E is also known to interact with other partners. In higher plants two isoforms of EIF4F have been identified, named isoform EIF4F and isoform EIF(iso)4F. Isoform EIF4F has subunits p220 and p26, whereas isoform EIF(iso)4F has subunits p82 and p28. As to quaternary structure, (Microbial infection) Interacts with potyvirus viral genome-linked protein (VPg); this interaction is possible in susceptible hosts but impaired in resistant plants. Post-translationally, according to the redox status, the Cys-120-Cys-158 disulfide bridge may have a role in regulating protein function by affecting its ability to bind capped mRNA. In terms of tissue distribution, strongly expressed in susceptible plants but not in resistant ones.

The protein localises to the nucleus. It localises to the cytoplasm. In terms of biological role, component of the protein complex eIF4F, which is involved in the recognition of the mRNA cap, ATP-dependent unwinding of 5'-terminal secondary structure and recruitment of mRNA to the ribosome. Recognizes and binds the 7-methylguanosine-containing mRNA cap during an early step in the initiation of protein synthesis and facilitates ribosome binding by inducing the unwinding of the mRNAs secondary structures. Key component of recessive resistance to potyviruses. (Microbial infection) Susceptibility host factor required for viral infection (e.g. potato virus Y (PVY) and pepper mottle virus (PepMoV)) by recruiting viral RNAs to the host ribosomal complex via an interaction with viral genome-linked protein (VPg). This chain is Eukaryotic translation initiation factor 4E-2, found in Nicotiana tabacum (Common tobacco).